The chain runs to 396 residues: Phosphoglycerate kinase (396 aa).

Substrate contacts are provided by residues 19-21 (DFN), Arg34, 57-60 (HLGK), Arg116, and Arg153. Residues Lys204, Glu324, and 351-354 (GGDT) contribute to the ATP site.

This sequence belongs to the phosphoglycerate kinase family. Monomer.

The protein localises to the cytoplasm. The catalysed reaction is (2R)-3-phosphoglycerate + ATP = (2R)-3-phospho-glyceroyl phosphate + ADP. The protein operates within carbohydrate degradation; glycolysis; pyruvate from D-glyceraldehyde 3-phosphate: step 2/5. This is Phosphoglycerate kinase from Maridesulfovibrio salexigens (strain ATCC 14822 / DSM 2638 / NCIMB 8403 / VKM B-1763) (Desulfovibrio salexigens).